The following is a 144-amino-acid chain: UPF0735 ACT domain-containing protein NT01CX_1681 (144 aa).

The region spanning 68–143 is the ACT domain; it reads TIGFLLSHKA…NVVKVSLIAM (76 aa).

Belongs to the UPF0735 family.

This is UPF0735 ACT domain-containing protein NT01CX_1681 from Clostridium novyi (strain NT).